The following is a 181-amino-acid chain: Crossover junction endodeoxyribonuclease RuvC (181 aa).

Residues aspartate 7, glutamate 67, and aspartate 139 contribute to the active site. Residues aspartate 7, glutamate 67, and aspartate 139 each coordinate Mg(2+).

This sequence belongs to the RuvC family. Homodimer which binds Holliday junction (HJ) DNA. The HJ becomes 2-fold symmetrical on binding to RuvC with unstacked arms; it has a different conformation from HJ DNA in complex with RuvA. In the full resolvosome a probable DNA-RuvA(4)-RuvB(12)-RuvC(2) complex forms which resolves the HJ. The cofactor is Mg(2+).

Its subcellular location is the cytoplasm. The catalysed reaction is Endonucleolytic cleavage at a junction such as a reciprocal single-stranded crossover between two homologous DNA duplexes (Holliday junction).. Functionally, the RuvA-RuvB-RuvC complex processes Holliday junction (HJ) DNA during genetic recombination and DNA repair. Endonuclease that resolves HJ intermediates. Cleaves cruciform DNA by making single-stranded nicks across the HJ at symmetrical positions within the homologous arms, yielding a 5'-phosphate and a 3'-hydroxyl group; requires a central core of homology in the junction. The consensus cleavage sequence is 5'-(A/T)TT(C/G)-3'. Cleavage occurs on the 3'-side of the TT dinucleotide at the point of strand exchange. HJ branch migration catalyzed by RuvA-RuvB allows RuvC to scan DNA until it finds its consensus sequence, where it cleaves and resolves the cruciform DNA. The polypeptide is Crossover junction endodeoxyribonuclease RuvC (Cupriavidus pinatubonensis (strain JMP 134 / LMG 1197) (Cupriavidus necator (strain JMP 134))).